Reading from the N-terminus, the 408-residue chain is CinA-like protein (408 aa).

Belongs to the CinA family.

In Anaeromyxobacter sp. (strain K), this protein is CinA-like protein.